We begin with the raw amino-acid sequence, 164 residues long: Cyclic pyranopterin monophosphate synthase (164 aa).

Residues 75–77 (MAH) and 112–113 (ME) each bind substrate. Residue D127 is part of the active site.

The protein belongs to the MoaC family. Homohexamer; trimer of dimers.

The catalysed reaction is (8S)-3',8-cyclo-7,8-dihydroguanosine 5'-triphosphate = cyclic pyranopterin phosphate + diphosphate. The protein operates within cofactor biosynthesis; molybdopterin biosynthesis. Catalyzes the conversion of (8S)-3',8-cyclo-7,8-dihydroguanosine 5'-triphosphate to cyclic pyranopterin monophosphate (cPMP). This Desulforamulus reducens (strain ATCC BAA-1160 / DSM 100696 / MI-1) (Desulfotomaculum reducens) protein is Cyclic pyranopterin monophosphate synthase.